Consider the following 180-residue polypeptide: ATP synthase subunit delta (180 aa).

It belongs to the ATPase delta chain family. F-type ATPases have 2 components, F(1) - the catalytic core - and F(0) - the membrane proton channel. F(1) has five subunits: alpha(3), beta(3), gamma(1), delta(1), epsilon(1). F(0) has three main subunits: a(1), b(2) and c(10-14). The alpha and beta chains form an alternating ring which encloses part of the gamma chain. F(1) is attached to F(0) by a central stalk formed by the gamma and epsilon chains, while a peripheral stalk is formed by the delta and b chains.

Its subcellular location is the cell membrane. In terms of biological role, f(1)F(0) ATP synthase produces ATP from ADP in the presence of a proton or sodium gradient. F-type ATPases consist of two structural domains, F(1) containing the extramembraneous catalytic core and F(0) containing the membrane proton channel, linked together by a central stalk and a peripheral stalk. During catalysis, ATP synthesis in the catalytic domain of F(1) is coupled via a rotary mechanism of the central stalk subunits to proton translocation. This protein is part of the stalk that links CF(0) to CF(1). It either transmits conformational changes from CF(0) to CF(1) or is implicated in proton conduction. This Limosilactobacillus reuteri (strain DSM 20016) (Lactobacillus reuteri) protein is ATP synthase subunit delta.